The chain runs to 353 residues: Protein-arginine kinase (353 aa).

In terms of domain architecture, Phosphagen kinase C-terminal spans 24 to 256 (IVLSSRIRLA…RTVIDTEEQA (233 aa)). ATP-binding positions include 27 to 31 (SSRIR), H93, R127, 178 to 182 (RASVM), and 209 to 214 (RGLYGE). Positions 339–344 (RDVRRA) match the RDXXRA motif of the pArg binding pocket involved in allosteric regulation motif.

The protein belongs to the ATP:guanido phosphotransferase family.

The enzyme catalyses L-arginyl-[protein] + ATP = N(omega)-phospho-L-arginyl-[protein] + ADP + H(+). Its activity is regulated as follows. Appears to be allosterically activated by the binding of pArg-containing polypeptides to the pArg-binding pocket localized in the C-terminal domain of McsB. Functionally, catalyzes the specific phosphorylation of arginine residues in proteins. This Symbiobacterium thermophilum (strain DSM 24528 / JCM 14929 / IAM 14863 / T) protein is Protein-arginine kinase.